The primary structure comprises 418 residues: Inner capsid protein sigma-2 (418 aa).

It belongs to the orthoreovirus sigma-1 protein family. As to quaternary structure, interacts with protein mu-NS; in viral inclusions.

The protein localises to the virion. Functionally, inner capsid (core) component. The sequence is that of Inner capsid protein sigma-2 (S2) from Mammalia (T2J).